Reading from the N-terminus, the 419-residue chain is Dynein regulatory complex protein 9 (419 aa).

2 disordered regions span residues 25 to 45 (TGEP…EETS) and 394 to 419 (NFKM…RRKK). Positions 30–45 (EAAEEDLDYEEEEETS) are enriched in acidic residues. Positions 372–401 (ELRSIVKLQAWWRGSVVRKEIGNFKMPKKD) constitute an IQ domain. A compositionally biased stretch (basic and acidic residues) spans 394-413 (NFKMPKKDKDDSKDSKGKEK).

This sequence belongs to the DRC9 family. In terms of assembly, component of the nexin-dynein regulatory complex (N-DRC). Interacts (via IQ domain) with CALM when calcium levels are low. Does not interact with CALM in the presence of Ca(2+). Interacts with the HSP70 proteins HSPA1L and HSPA8. May form a complex with CAMK4 and HSP70. In terms of tissue distribution, expressed in the testes (at protein level). Also detected in oviduct (at protein level). Also detected in the trachea.

The protein localises to the cytoplasm. It is found in the cell projection. Its subcellular location is the cilium. The protein resides in the flagellum. It localises to the cytoskeleton. The protein localises to the flagellum axoneme. Functionally, component of the nexin-dynein regulatory complex (N-DRC), a key regulator of ciliary/flagellar motility which maintains the alignment and integrity of the distal axoneme and regulates microtubule sliding in motile axonemes. Binds calmodulin when cellular Ca(2+) levels are low and thereby contributes to the regulation of calcium and calmodulin-dependent protein kinase IV (CAMK4) activity; contributes to the regulation of CAMK4 signaling cascades. Required for normal axoneme assembly in sperm flagella, normal sperm tail formation and for male fertility. This Mus musculus (Mouse) protein is Dynein regulatory complex protein 9 (Iqcg).